A 1484-amino-acid chain; its full sequence is Glutamate receptor ionotropic, NMDA 2B (1484 aa).

Residues 1 to 26 form the signal peptide; it reads MKPRAECCSPKFWLVLAVLAVSGSRA. Topologically, residues 27–555 are extracellular; it reads RSQKSPPSIG…SPSAFLEPFS (529 aa). N-linked (GlcNAc...) asparagine glycosylation is present at asparagine 74. Residues cysteine 86 and cysteine 321 are joined by a disulfide bond. Zn(2+) contacts are provided by histidine 127 and glutamate 284. Asparagine 341, asparagine 348, asparagine 444, and asparagine 491 each carry an N-linked (GlcNAc...) asparagine glycan. Intrachain disulfides connect cysteine 429–cysteine 456 and cysteine 436–cysteine 457. Residues threonine 514 and arginine 519 each contribute to the L-glutamate site. A glycan (N-linked (GlcNAc...) asparagine) is linked at asparagine 542. A helical membrane pass occupies residues 556-576; that stretch reads ADVWVMMFVMLLIVSAVAVFV. The Cytoplasmic segment spans residues 577–601; it reads FEYFSPVGYNRCLADGREPGGPSFT. Positions 602–613 form an intramembrane region, discontinuously helical; sequence IGKAIWLLWGLV. Residues 604-623 are pore-forming; the sequence is KAIWLLWGLVFNNSVPVQNP. Residues 614-627 lie on the Cytoplasmic side of the membrane; sequence FNNSVPVQNPKGTT. The helical transmembrane segment at 628 to 647 threads the bilayer; the sequence is SKIMVSVWAFFAVIFLASYT. Over 648 to 819 the chain is Extracellular; sequence ANLAAFMIQE…SSQLDIDNMA (172 aa). An N-linked (GlcNAc...) asparagine glycan is attached at asparagine 688. Residues 690 to 691 and aspartate 732 contribute to the L-glutamate site; that span reads ST. A helical transmembrane segment spans residues 820-835; the sequence is GVFYMLGAAMALSLIT. Residues 836–1484 are Cytoplasmic-facing; sequence FICEHLFYWQ…EKLSSIESDV (649 aa). Residues serine 882, serine 886, serine 917, and serine 920 each carry the phosphoserine modification. Residues tyrosine 962 and tyrosine 1039 each carry the phosphotyrosine modification. Phosphoserine occurs at positions 1058, 1061, and 1064. The tract at residues 1074 to 1097 is disordered; that stretch reads EGNAAKRRKQQYKDSLKKRPASAK. A phosphotyrosine mark is found at tyrosine 1109 and tyrosine 1133. At serine 1143 the chain carries Phosphoserine. Tyrosine 1155 is subject to Phosphotyrosine. Residues 1161–1194 are disordered; it reads DFKRDSVSGGGPCTNRSHIKHGTGDKHGVVSGVP. A phosphoserine mark is found at serine 1255 and serine 1259. The disordered stretch occupies residues 1271–1301; it reads AVTSNASTTKYPQSPTNSKAQKKNRNKLRRQ. Residues 1272 to 1289 are compositionally biased toward polar residues; sequence VTSNASTTKYPQSPTNSK. Residues 1290–1301 are compositionally biased toward basic residues; that stretch reads AQKKNRNKLRRQ. An interaction with DAPK1 region spans residues 1292 to 1304; the sequence is KKNRNKLRRQHSY. Serine 1303 bears the Phosphoserine; by DAPK1 mark. Residue tyrosine 1474 is modified to Phosphotyrosine. The PDZ-binding motif lies at 1482-1484; that stretch reads SDV.

Belongs to the glutamate-gated ion channel (TC 1.A.10.1) family. NR2B/GRIN2B subfamily. As to quaternary structure, heterotetramer. Forms heterotetrameric channels composed of two GluN1/zeta subunits (GRIN1), and two identical GluN2/epsilon subunits (GRIN2A, GRIN2B, GRIN2C or GRIN2D) or GluN3 subunits (GRIN3A or GRIN3B) (in vitro). Can also form heterotetrameric channels that contain at least two GluN1 subunits and at least two different GluN2 subunits (or a combination of one GluN2 and one GluN3 subunits) (in vitro). In vivo, the subunit composition may depend on the expression levels of the different subunits. Found in a complex with GRIN1 and GRIN3B. Found in a complex with GRIN1, GRIN3A and PPP2CB. Interacts with PDZ domains of PATJ, DLG3 and DLG4. Interacts with HIP1 and NETO1. Interacts with MAGI3. Interacts with DAPK1. Found in a complex with GRIN1 and PRR7. Interacts with PRR7. Interacts with CAMK2A. Interacts with ARC; preventing ARC oligomerization. Interacts with TMEM25. Interacts (via the extreme C-terminus) with FRMPD2 (via the second PDZ domain); the interaction is direct and is likely to promote NMDAR-mediated neural signal transmission. Interacts with FAM81A; the interaction facilitates condensate formation via liquid-liquid phase separation. In terms of processing, phosphorylated on tyrosine residues. Phosphorylation at Ser-1303 by DAPK1 enhances synaptic NMDA receptor channel activity. Primarily found in the fronto-parieto-temporal cortex and hippocampus pyramidal cells, lower expression in the basal ganglia.

Its subcellular location is the cell membrane. It localises to the postsynaptic cell membrane. The protein localises to the cell projection. It is found in the dendrite. The protein resides in the late endosome. Its subcellular location is the lysosome. It localises to the cytoplasm. The protein localises to the cytoskeleton. The enzyme catalyses Ca(2+)(in) = Ca(2+)(out). It carries out the reaction Na(+)(in) = Na(+)(out). It catalyses the reaction K(+)(in) = K(+)(out). Component of N-methyl-D-aspartate (NMDA) receptors (NMDARs) that function as heterotetrameric, ligand-gated cation channels with high calcium permeability and voltage-dependent block by Mg(2+). Participates in synaptic plasticity for learning and memory formation by contributing to the long-term depression (LTD) of hippocampus membrane currents. Channel activation requires binding of the neurotransmitter L-glutamate to the GluN2 subunit, glycine or D-serine binding to the GluN1 subunit, plus membrane depolarization to eliminate channel inhibition by Mg(2+). NMDARs mediate simultaneously the potasium efflux and the influx of calcium and sodium. Each GluN2 subunit confers differential attributes to channel properties, including activation, deactivation and desensitization kinetics, pH sensitivity, Ca2(+) permeability, and binding to allosteric modulators. In concert with DAPK1 at extrasynaptic sites, acts as a central mediator for stroke damage. Its phosphorylation at Ser-1303 by DAPK1 enhances synaptic NMDA receptor channel activity inducing injurious Ca2+ influx through them, resulting in an irreversible neuronal death. The protein is Glutamate receptor ionotropic, NMDA 2B of Homo sapiens (Human).